We begin with the raw amino-acid sequence, 356 residues long: UDP-N-acetylglucosamine--N-acetylmuramyl-(pentapeptide) pyrophosphoryl-undecaprenol N-acetylglucosamine transferase (356 aa).

2 residues coordinate UDP-N-acetyl-alpha-D-glucosamine: Ser-198 and Gln-289.

This sequence belongs to the glycosyltransferase 28 family. MurG subfamily.

It localises to the cell membrane. The enzyme catalyses Mur2Ac(oyl-L-Ala-gamma-D-Glu-L-Lys-D-Ala-D-Ala)-di-trans,octa-cis-undecaprenyl diphosphate + UDP-N-acetyl-alpha-D-glucosamine = beta-D-GlcNAc-(1-&gt;4)-Mur2Ac(oyl-L-Ala-gamma-D-Glu-L-Lys-D-Ala-D-Ala)-di-trans,octa-cis-undecaprenyl diphosphate + UDP + H(+). It functions in the pathway cell wall biogenesis; peptidoglycan biosynthesis. Functionally, cell wall formation. Catalyzes the transfer of a GlcNAc subunit on undecaprenyl-pyrophosphoryl-MurNAc-pentapeptide (lipid intermediate I) to form undecaprenyl-pyrophosphoryl-MurNAc-(pentapeptide)GlcNAc (lipid intermediate II). This Streptococcus thermophilus (strain CNRZ 1066) protein is UDP-N-acetylglucosamine--N-acetylmuramyl-(pentapeptide) pyrophosphoryl-undecaprenol N-acetylglucosamine transferase.